Here is a 444-residue protein sequence, read N- to C-terminus: Chromosomal replication initiator protein DnaA (444 aa).

The tract at residues 1 to 66 is domain I, interacts with DnaA modulators; it reads MKSEIIESLK…SKTLRELFGK (66 aa). Residues 66–100 are domain II; it reads KPMDFRIEHASAKTEEKLDSNEDEPLVKKRPLILT. Positions 101-317 are domain III, AAA+ region; the sequence is PLNPILTFEN…GALVKLIMYQ (217 aa). 4 residues coordinate ATP: Gly-144, Gly-146, Lys-147, and Thr-148. Residues 318–444 form a domain IV, binds dsDNA region; the sequence is QISGEKVDLQ…VTGQILDQSV (127 aa).

It belongs to the DnaA family. Oligomerizes as a right-handed, spiral filament on DNA at oriC.

It localises to the cytoplasm. Its function is as follows. Plays an essential role in the initiation and regulation of chromosomal replication. ATP-DnaA binds to the origin of replication (oriC) to initiate formation of the DNA replication initiation complex once per cell cycle. Binds the DnaA box (a 9 base pair repeat at the origin) and separates the double-stranded (ds)DNA. Forms a right-handed helical filament on oriC DNA; dsDNA binds to the exterior of the filament while single-stranded (ss)DNA is stabiized in the filament's interior. The ATP-DnaA-oriC complex binds and stabilizes one strand of the AT-rich DNA unwinding element (DUE), permitting loading of DNA polymerase. After initiation quickly degrades to an ADP-DnaA complex that is not apt for DNA replication. Binds acidic phospholipids. In Pseudothermotoga lettingae (strain ATCC BAA-301 / DSM 14385 / NBRC 107922 / TMO) (Thermotoga lettingae), this protein is Chromosomal replication initiator protein DnaA.